Here is a 317-residue protein sequence, read N- to C-terminus: MADIQDEAGPFLPPTISPPALLSGVSQTYFSPIPPQLLADNTPCCLGVDEAGRGPVLGPMVYSAFYLPLTLSDPLLKQKHSFDDSKVLTPAVRLSLMKELCTKDTELHDNCGYATSSLSPLSISSGMLKASKAQIYNLNQQAMDATIALIKGIYERGVNVTDIFIDTIGQPAAYQKKLERVFPTAKITVAKKADSLYPVVSAASVVAKVTRDIALEVLWADRTMAWGSGYPSDSKCVSWLKQNMHPVFGWGPECRFSWGTAKDMLETKGGVKVDWPEEEEEETQKLTDFFMAKRDQAEVDVDDLGTWFGAPAGVECF.

The RNase H type-2 domain occupies 43-270 (PCCLGVDEAG…AKDMLETKGG (228 aa)). A divalent metal cation is bound by residues Asp-49, Glu-50, and Asp-166.

The protein belongs to the RNase HII family. Eukaryotic subfamily. The cofactor is Mn(2+). Requires Mg(2+) as cofactor.

It catalyses the reaction Endonucleolytic cleavage to 5'-phosphomonoester.. In terms of biological role, endonuclease that specifically degrades the RNA of RNA-DNA hybrids. Participates in DNA replication. The protein is Ribonuclease H2 subunit A (rnh-201) of Neurospora crassa (strain ATCC 24698 / 74-OR23-1A / CBS 708.71 / DSM 1257 / FGSC 987).